The primary structure comprises 117 residues: Large ribosomal subunit protein bL19 (117 aa).

It belongs to the bacterial ribosomal protein bL19 family.

Functionally, this protein is located at the 30S-50S ribosomal subunit interface and may play a role in the structure and function of the aminoacyl-tRNA binding site. The protein is Large ribosomal subunit protein bL19 of Vesicomyosocius okutanii subsp. Calyptogena okutanii (strain HA).